The chain runs to 347 residues: Adenine deaminase (347 aa).

The Zn(2+) site is built by His-16, His-18, and His-204. The active-site Proton donor is the Glu-207. Zn(2+) is bound at residue Asp-285. Residue Asp-286 coordinates substrate.

This sequence belongs to the metallo-dependent hydrolases superfamily. Adenosine and AMP deaminases family. Adenine deaminase type 2 subfamily. The cofactor is Zn(2+). Probably ubiquitinated when cells enter quiescence in response to nutrient limitation, since it is specifically degraded via a process requiring the F-box protein SAF1 and components of the SKP1-Cullin-F-box complex.

The protein localises to the cytoplasm. It is found in the nucleus. It catalyses the reaction adenine + H2O + H(+) = hypoxanthine + NH4(+). Its function is as follows. Catalyzes the hydrolytic deamination of adenine to hypoxanthine. Plays an important role in the purine salvage pathway and in nitrogen catabolism. Also exhibits a low activity towards N(6)-substituted adenines that are commonly known as the plant hormones cytokinins. In Saccharomyces cerevisiae (strain ATCC 204508 / S288c) (Baker's yeast), this protein is Adenine deaminase.